A 332-amino-acid polypeptide reads, in one-letter code: tRNA(Ile)-lysidine synthase (332 aa).

Position 39–44 (39–44 (SGGADS)) interacts with ATP.

It belongs to the tRNA(Ile)-lysidine synthase family.

The protein resides in the cytoplasm. It carries out the reaction cytidine(34) in tRNA(Ile2) + L-lysine + ATP = lysidine(34) in tRNA(Ile2) + AMP + diphosphate + H(+). Ligates lysine onto the cytidine present at position 34 of the AUA codon-specific tRNA(Ile) that contains the anticodon CAU, in an ATP-dependent manner. Cytidine is converted to lysidine, thus changing the amino acid specificity of the tRNA from methionine to isoleucine. In Leifsonia xyli subsp. xyli (strain CTCB07), this protein is tRNA(Ile)-lysidine synthase.